The chain runs to 442 residues: Cyclin-A1-2 (442 aa).

Polar residues-rich tracts occupy residues 1–12 (MSSSSRNLSQEN) and 39–63 (ITNQ…NKIG). The interval 1-72 (MSSSSRNLSQ…GQSKKAPKPA (72 aa)) is disordered.

The protein belongs to the cyclin family. Cyclin AB subfamily. Interacts with CDC20-1, CDC20-2, FZR2/CCS52A1 and FZR1/CCS52A2. Expressed in roots, stems and flowers.

The protein resides in the cytoplasm. The protein localises to the nucleus. In terms of biological role, involved in the regulation of male meiosis progression. This is Cyclin-A1-2 (CYCA1-2) from Arabidopsis thaliana (Mouse-ear cress).